A 214-amino-acid chain; its full sequence is Adenylate kinase (214 aa).

Position 10 to 15 (10 to 15 (GAGKGT)) interacts with ATP. Residues 30 to 59 (STGDMLRAAVKAQTPVGLKAKAVMDRGELV) form an NMP region. AMP-binding positions include Thr-31, Arg-36, 57–59 (ELV), 85–88 (GYPR), and Gln-92. The interval 126–163 (GRFTCAKCGTGYHDRHKQPAREGVCDVCGSTEFKRRPD) is LID. Arg-127 contacts ATP. Zn(2+) contacts are provided by Cys-130, Cys-133, Cys-150, and Cys-153. The AMP site is built by Arg-160 and Arg-172. ATP is bound at residue Gly-200.

This sequence belongs to the adenylate kinase family. As to quaternary structure, monomer.

It localises to the cytoplasm. It carries out the reaction AMP + ATP = 2 ADP. It participates in purine metabolism; AMP biosynthesis via salvage pathway; AMP from ADP: step 1/1. Catalyzes the reversible transfer of the terminal phosphate group between ATP and AMP. Plays an important role in cellular energy homeostasis and in adenine nucleotide metabolism. The polypeptide is Adenylate kinase (Erythrobacter litoralis (strain HTCC2594)).